Reading from the N-terminus, the 173-residue chain is NADH-ubiquinone oxidoreductase chain 6 (173 aa).

5 helical membrane-spanning segments follow: residues 1 to 21 (MTYF…AVAS), 27 to 47 (YGVV…LSLG), 48 to 68 (VSFV…VVFV), 87 to 107 (VVGY…VGGF), and 139 to 159 (CGVG…FVVL).

It belongs to the complex I subunit 6 family.

It is found in the mitochondrion membrane. It catalyses the reaction a ubiquinone + NADH + 5 H(+)(in) = a ubiquinol + NAD(+) + 4 H(+)(out). Functionally, core subunit of the mitochondrial membrane respiratory chain NADH dehydrogenase (Complex I) that is believed to belong to the minimal assembly required for catalysis. Complex I functions in the transfer of electrons from NADH to the respiratory chain. The immediate electron acceptor for the enzyme is believed to be ubiquinone. In Aethia pygmaea (Whiskered auklet), this protein is NADH-ubiquinone oxidoreductase chain 6 (MT-ND6).